The chain runs to 322 residues: Methionyl-tRNA formyltransferase (322 aa).

115-118 lines the (6S)-5,6,7,8-tetrahydrofolate pocket; it reads SLLP.

This sequence belongs to the Fmt family.

The enzyme catalyses L-methionyl-tRNA(fMet) + (6R)-10-formyltetrahydrofolate = N-formyl-L-methionyl-tRNA(fMet) + (6S)-5,6,7,8-tetrahydrofolate + H(+). Its function is as follows. Attaches a formyl group to the free amino group of methionyl-tRNA(fMet). The formyl group appears to play a dual role in the initiator identity of N-formylmethionyl-tRNA by promoting its recognition by IF2 and preventing the misappropriation of this tRNA by the elongation apparatus. This is Methionyl-tRNA formyltransferase from Treponema denticola (strain ATCC 35405 / DSM 14222 / CIP 103919 / JCM 8153 / KCTC 15104).